The primary structure comprises 675 residues: Protein brown (675 aa).

At 1–419 the chain is on the cytoplasmic side; it reads MQESGGSSGQ…TEDLRNIRSG (419 aa). The 228-residue stretch at 34 to 261 folds into the ABC transporter domain; that stretch reads YSFWNECRKK…EVVAESHESL (228 aa). 66–73 contacts ATP; the sequence is GGSGAGKT. Residues 229 to 249 form a disordered region; it reads EDSFETPSGESSASGSGSKSI. A compositionally biased stretch (low complexity) spans 236–248; it reads SGESSASGSGSKS. Residues 420–440 form a helical membrane-spanning segment; it reads LIAFGFFMITAVTLSLMYSGI. Residues 441 to 460 lie on the Extracellular side of the membrane; sequence GGLTQRTVQDVGGSIFMLSN. A helical transmembrane segment spans residues 461–481; that stretch reads EMIFTFSYGVTYIFPAALPII. The Cytoplasmic segment spans residues 482–497; sequence RREVGEGTYSLSAYYV. The chain crosses the membrane as a helical span at residues 498–518; that stretch reads ALVLSFVPVAFFKGYVFLSVI. Residues 519–531 are Extracellular-facing; the sequence is YASIYYTRGFLLY. The chain crosses the membrane as a helical span at residues 532-552; sequence LSMGFLMSLSAVAAVGYGVFL. The Cytoplasmic portion of the chain corresponds to 553–568; it reads SSLFESDKMASECAAP. Residues 569 to 589 traverse the membrane as a helical segment; that stretch reads FDLIFLIFGGTYMNVDTVPGL. Over 590-644 the chain is Extracellular; the sequence is KYLSLFFYSNEALMYKFWIDIDNIDCPVNEDHPCIKTGVEVLQQGSYRNADYTYW. The helical transmembrane segment at 645-665 threads the bilayer; that stretch reads LDCFSLVVVAVIFHIVSFGLV. At 666–675 the chain is on the cytoplasmic side; sequence RRYIHRSGYY.

It belongs to the ABC transporter superfamily. ABCG family. Eye pigment precursor importer (TC 3.A.1.204) subfamily. As to quaternary structure, may form a heterodimer with w/white.

It is found in the membrane. The enzyme catalyses guanine(out) + ATP + H2O = guanine(in) + ADP + phosphate + H(+). It carries out the reaction riboflavin(in) + ATP + H2O = riboflavin(out) + ADP + phosphate + H(+). The catalysed reaction is (6S)-5,6,7,8-tetrahydrofolate(out) + ATP + H2O = (6S)-5,6,7,8-tetrahydrofolate(in) + ADP + phosphate + H(+). Functionally, ATP-dependent transporter of the ATP-binding cassette (ABC) family which transports various molecules including bioamines, neurotransmitters and metabolic intermediates. In the eye and probably in association with w/white, required for the transport of the eye red pigment precursor, guanine, into pigment cell granules. In Malpighian tubules, involved in guanine uptake. Probably in association with w/white, involved in aging-induced intestinal stem cell proliferation in the midgut by regulating tetrahydrofolate transport. In Drosophila melanogaster (Fruit fly), this protein is Protein brown.